A 767-amino-acid polypeptide reads, in one-letter code: 5-methyltetrahydropteroyltriglutamate--homocysteine methyltransferase (767 aa).

5-methyltetrahydropteroyltri-L-glutamate contacts are provided by residues 17-20 and Lys117; that span reads RELK. L-homocysteine-binding positions include 442–444 and Glu495; that span reads IGS. L-methionine-binding positions include 442-444 and Glu495; that span reads IGS. 5-methyltetrahydropteroyltri-L-glutamate-binding positions include 526–527 and Trp572; that span reads RC. Asp610 provides a ligand contact to L-homocysteine. Asp610 serves as a coordination point for L-methionine. Glu616 is a binding site for 5-methyltetrahydropteroyltri-L-glutamate. The Zn(2+) site is built by His653, Cys655, and Glu677. The active-site Proton donor is the His706. Cys738 provides a ligand contact to Zn(2+).

It belongs to the vitamin-B12 independent methionine synthase family. Zn(2+) serves as cofactor.

The catalysed reaction is 5-methyltetrahydropteroyltri-L-glutamate + L-homocysteine = tetrahydropteroyltri-L-glutamate + L-methionine. The protein operates within amino-acid biosynthesis; L-methionine biosynthesis via de novo pathway; L-methionine from L-homocysteine (MetE route): step 1/1. Catalyzes the transfer of a methyl group from 5-methyltetrahydrofolate to homocysteine resulting in methionine formation. This is 5-methyltetrahydropteroyltriglutamate--homocysteine methyltransferase from Bifidobacterium animalis subsp. lactis (strain AD011).